Here is a 290-residue protein sequence, read N- to C-terminus: 33 kDa chaperonin (290 aa).

2 cysteine pairs are disulfide-bonded: Cys235/Cys237 and Cys268/Cys271.

This sequence belongs to the HSP33 family. In terms of processing, under oxidizing conditions two disulfide bonds are formed involving the reactive cysteines. Under reducing conditions zinc is bound to the reactive cysteines and the protein is inactive.

The protein localises to the cytoplasm. Its function is as follows. Redox regulated molecular chaperone. Protects both thermally unfolding and oxidatively damaged proteins from irreversible aggregation. Plays an important role in the bacterial defense system toward oxidative stress. The polypeptide is 33 kDa chaperonin (Streptococcus equi subsp. zooepidemicus (strain H70)).